We begin with the raw amino-acid sequence, 90 residues long: UPF0235 protein CPn_0497/CP_0257/CPj0497/CpB0517 (90 aa).

Belongs to the UPF0235 family.

The protein is UPF0235 protein CPn_0497/CP_0257/CPj0497/CpB0517 of Chlamydia pneumoniae (Chlamydophila pneumoniae).